Consider the following 443-residue polypeptide: UDP-N-acetylmuramate--L-alanine ligase (443 aa).

110–116 (GAHGKTS) provides a ligand contact to ATP.

This sequence belongs to the MurCDEF family.

It is found in the cytoplasm. It carries out the reaction UDP-N-acetyl-alpha-D-muramate + L-alanine + ATP = UDP-N-acetyl-alpha-D-muramoyl-L-alanine + ADP + phosphate + H(+). Its pathway is cell wall biogenesis; peptidoglycan biosynthesis. Functionally, cell wall formation. The chain is UDP-N-acetylmuramate--L-alanine ligase from Streptococcus suis (strain 98HAH33).